Consider the following 244-residue polypeptide: Type III pantothenate kinase (244 aa).

9-16 (DAGNSSLK) is a binding site for ATP. Residues Tyr-90 and 97 to 100 (GVDR) contribute to the substrate site. Residue Asp-99 is the Proton acceptor of the active site. Thr-122 contributes to the ATP binding site. Residue Thr-172 participates in substrate binding.

Belongs to the type III pantothenate kinase family. As to quaternary structure, homodimer. NH4(+) serves as cofactor. Requires K(+) as cofactor.

The protein localises to the cytoplasm. It catalyses the reaction (R)-pantothenate + ATP = (R)-4'-phosphopantothenate + ADP + H(+). It participates in cofactor biosynthesis; coenzyme A biosynthesis; CoA from (R)-pantothenate: step 1/5. Functionally, catalyzes the phosphorylation of pantothenate (Pan), the first step in CoA biosynthesis. The protein is Type III pantothenate kinase of Thiobacillus denitrificans (strain ATCC 25259 / T1).